We begin with the raw amino-acid sequence, 179 residues long: DELTA-actitoxin-Afr1e (179 aa).

An N-terminal alpha-helix that contributes to the pore region spans residues 1–29; that stretch reads SADVAGAVIDGAGLGFDVLKTVLEALGNV. The N-terminal region stretch occupies residues 11–30; sequence GAGLGFDVLKTVLEALGNVK. Residue Arg31 coordinates an N-(acyl)-sphingosylphosphocholine. 2 residues coordinate N-acetyl-D-glucosamine 6-sulfate: Tyr51 and Arg53. The an N-(acyl)-sphingosylphosphocholine site is built by Arg53, Ser54, Arg79, Gly85, Tyr108, Tyr113, Ser114, Trp116, Tyr133, Tyr137, Tyr138, Arg144, and Gly168. Residues 105 to 120 form a trp-rich region, which is important for the binding to lipid membrane region; it reads SVPYDYNWYSNWWNVR. Tyr138 serves as a coordination point for N-acetyl-D-glucosamine 6-sulfate. A Cell attachment site, crucial for protein stability motif is present at residues 144-146; it reads RGD.

Belongs to the actinoporin family. Sea anemone subfamily. As to quaternary structure, octamer or nonamer in membranes. Monomer in the soluble state.

The protein resides in the secreted. Its subcellular location is the nematocyst. The protein localises to the target cell membrane. Pore-forming toxin (PFT) that consists of a crown-shaped octamer or nonamer that forms cation-selective hydrophilic pores of about 1.5 nm (inside) and 13 nm (outside) and causes cytolysis. It causes cardiac stimulation. Also causes hemolysis (HC(50)=1.6 nM). Interestingly, the Phe-16 is crucial for hemolysis. Pore formation is a multi-step process that involves specific recognition of membrane sphingomyelin (but neither cholesterol nor phosphatidylcholine) using aromatic rich region and adjacent phosphocholine (POC) binding site, firm binding to the membrane (mainly driven by hydrophobic interactions) accompanied by the transfer of the N-terminal region to the lipid-water interface and finally pore formation after oligomerization of monomers. It is probable that a dimeric form is an assembly intermediate before the complete oligomerization. The formation of stable pores occurs only in vesicles composed of DOPC/SM (there is no oligomerization when the PFT is treated with vesicles of DOPC or SM alone). The transmembrane pore displays 8 lateral perforations, one at each subunit-subunit interface, partially occupied by the acyl-chain region of a bridging lipid. Each pore contains 24 lipid molecules, firmly bound to each subunit, that is, 3 lipids (L1, L2, L3, L4 and/or L5) are associated to each subunit. Lipid L1 bridges 2 subunits, whereas lipids L2 and L3 bind to sites at single subunit. The sequence is that of DELTA-actitoxin-Afr1e from Actinia fragacea (Strawberry anemone).